The primary structure comprises 218 residues: LexA repressor (218 aa).

The H-T-H motif DNA-binding region spans arginine 28–arginine 48. Catalysis depends on for autocatalytic cleavage activity residues serine 136 and lysine 173.

Belongs to the peptidase S24 family. Homodimer.

It carries out the reaction Hydrolysis of Ala-|-Gly bond in repressor LexA.. Functionally, represses a number of genes involved in the response to DNA damage (SOS response), including recA and lexA. In the presence of single-stranded DNA, RecA interacts with LexA causing an autocatalytic cleavage which disrupts the DNA-binding part of LexA, leading to derepression of the SOS regulon and eventually DNA repair. This chain is LexA repressor, found in Cupriavidus metallidurans (strain ATCC 43123 / DSM 2839 / NBRC 102507 / CH34) (Ralstonia metallidurans).